The primary structure comprises 463 residues: Senescence/dehydration-associated protein At3g51250 (463 aa).

Residues 1–12 (MNPSHGGDDKQR) are compositionally biased toward basic and acidic residues. 3 disordered regions span residues 1–31 (MNPS…FAST), 52–74 (PNLF…PQAT), and 146–172 (IHPP…KSKS). Positions 19-31 (VDQSIPDNPFAST) are enriched in polar residues. Residues 269–437 (IASGSGKLIR…AWVAFKIRKA (169 aa)) enclose the Senescence domain.

This chain is Senescence/dehydration-associated protein At3g51250, found in Arabidopsis thaliana (Mouse-ear cress).